The chain runs to 446 residues: Solute carrier family 52, riboflavin transporter, member 2 (446 aa).

4 helical membrane-spanning segments follow: residues 14–34, 47–67, 79–99, and 104–124; these read LLVALFGMGSWAAINGIWVEL, LPSYLSVLVALGNLGLLVVTL, APIQVVQALSVVGTALLAPLW, and VMAGQVHSVAFLALTFVLALA. The N-linked (GlcNAc...) asparagine glycan is linked to Asn-129. 2 consecutive transmembrane segments (helical) span residues 147 to 167 and 196 to 216; these read FFLGQGLSALLPCVLALGQGV and FFGALTALLVISAAAFQGLLL. Positions 228–267 are disordered; it reads GSGTGLRGGAPGVEEEEEEEASPLQEPPSQAAGNTPSPDP. Residues 229-238 are compositionally biased toward gly residues; that stretch reads SGTGLRGGAP. Over residues 254–263 the composition is skewed to polar residues; that stretch reads PPSQAAGNTP. Transmembrane regions (helical) follow at residues 278–298, 313–333, 340–360, 367–387, and 405–425; these read ACLLGLLATTSALTNGVLPAV, LAVVLGSASNPLACFLAMGIL, LGGLSLLGTLFGAYLMALAIL, VGTSAGMVLVVVLWALCLGVF, and ALLAAGVAIQVGSLLGAVTMF.

This sequence belongs to the riboflavin transporter family.

The protein localises to the cell membrane. It catalyses the reaction riboflavin(in) = riboflavin(out). Its activity is regulated as follows. Riboflavin transport is Na(+)-independent but moderately pH-sensitive. Activity is strongly inhibited by riboflavin analogs, such as lumiflavin. Weakly inhibited by flavin adenine dinucleotide (FAD) and flavin mononucleotide (FMN). Functionally, plasma membrane transporter mediating the uptake by cells of the water soluble vitamin B2/riboflavin that plays a key role in biochemical oxidation-reduction reactions of the carbohydrate, lipid, and amino acid metabolism. May also act as a receptor for 4-hydroxybutyrate. Its function is as follows. (Microbial infection) In case of infection by porcine endogenous retrovirus (PERV-A), acts as a cell receptor to retroviral envelopes. The protein is Solute carrier family 52, riboflavin transporter, member 2 (SLC52A2) of Sus scrofa (Pig).